The chain runs to 181 residues: Large ribosomal subunit protein uL5 (181 aa).

The protein belongs to the universal ribosomal protein uL5 family. Part of the 50S ribosomal subunit; part of the 5S rRNA/L5/L18/L25 subcomplex. Contacts the 5S rRNA and the P site tRNA. Forms a bridge to the 30S subunit in the 70S ribosome.

Functionally, this is one of the proteins that bind and probably mediate the attachment of the 5S RNA into the large ribosomal subunit, where it forms part of the central protuberance. In the 70S ribosome it contacts protein S13 of the 30S subunit (bridge B1b), connecting the 2 subunits; this bridge is implicated in subunit movement. Contacts the P site tRNA; the 5S rRNA and some of its associated proteins might help stabilize positioning of ribosome-bound tRNAs. The protein is Large ribosomal subunit protein uL5 of Aster yellows witches'-broom phytoplasma (strain AYWB).